Here is a 196-residue protein sequence, read N- to C-terminus: FAD-linked sulfhydryl oxidase ERV2 (196 aa).

Residues 1–12 (MKQIVKRSHAIR) are Cytoplasmic-facing. A helical; Signal-anchor transmembrane segment spans residues 13 to 35 (IVAALGIIGLWMFFSSNELSIAT). Over 36 to 196 (PGLIKAKSGI…SLEKEAKQHG (161 aa)) the chain is Lumenal. The region spanning 72-174 (MGDDKVKKEV…YDCATILEDY (103 aa)) is the ERV/ALR sulfhydryl oxidase domain. Residues Lys78, Arg83, and Trp86 each contribute to the FAD site. An intrachain disulfide couples Cys121 to Cys124. Residues His127, Cys150, His153, Asn157, Lys162, and Tyr174 each coordinate FAD. An intrachain disulfide couples Cys150 to Cys167. Cys176 and Cys178 form a disulfide bridge.

As to quaternary structure, homodimer. Interacts with the substrate protein PDI1, forming transient intermolecular disulfide bridges. The cofactor is FAD.

Its subcellular location is the endoplasmic reticulum membrane. It carries out the reaction 2 R'C(R)SH + O2 = R'C(R)S-S(R)CR' + H2O2. Functionally, FAD-dependent sulfhydryl oxidase that catalyzes disulfide bond formation in the endoplasmic reticulum lumen in parallel to ERO1. This chain is FAD-linked sulfhydryl oxidase ERV2 (ERV2), found in Saccharomyces cerevisiae (strain ATCC 204508 / S288c) (Baker's yeast).